Consider the following 678-residue polypeptide: Penicillin-binding protein activator LpoA (678 aa).

Residues 1-26 (MVPSTFSRLKAARCLPVVLAALIFAG) form the signal peptide. A lipid anchor (N-palmitoyl cysteine) is attached at Cys27. The S-diacylglycerol cysteine moiety is linked to residue Cys27. Disordered stretches follow at residues 302–340 (DVAEQPQPQTVDGVASPAQASVSDLTGDQPAAQPVPVSA) and 496–528 (ALTGTPITPRATTDSGMTTNNPTLQTTPTDDQF). Composition is skewed to low complexity over residues 330 to 340 (QPAAQPVPVSA) and 513 to 528 (TTNNPTLQTTPTDDQF).

The protein belongs to the LpoA family. As to quaternary structure, interacts with PBP1a.

It localises to the cell outer membrane. Its function is as follows. Regulator of peptidoglycan synthesis that is essential for the function of penicillin-binding protein 1A (PBP1a). The protein is Penicillin-binding protein activator LpoA of Shigella sonnei (strain Ss046).